We begin with the raw amino-acid sequence, 203 residues long: UPF0637 protein SSP1683 (203 aa).

The protein belongs to the UPF0637 family.

The protein is UPF0637 protein SSP1683 of Staphylococcus saprophyticus subsp. saprophyticus (strain ATCC 15305 / DSM 20229 / NCIMB 8711 / NCTC 7292 / S-41).